Consider the following 254-residue polypeptide: Small ribosomal subunit protein uS2 (254 aa).

Residues 228–248 are compositionally biased toward basic and acidic residues; that stretch reads RKERKGQDAEEELKKASEPKA. The tract at residues 228–254 is disordered; sequence RKERKGQDAEEELKKASEPKAAEAAAE.

It belongs to the universal ribosomal protein uS2 family.

This Nitratidesulfovibrio vulgaris (strain ATCC 29579 / DSM 644 / CCUG 34227 / NCIMB 8303 / VKM B-1760 / Hildenborough) (Desulfovibrio vulgaris) protein is Small ribosomal subunit protein uS2.